The following is a 92-amino-acid chain: Sec-independent protein translocase protein TatA (92 aa).

A helical membrane pass occupies residues Ile-2 to Phe-22. A disordered region spans residues Lys-43–Gly-92. Over residues Glu-53–Gln-80 the composition is skewed to basic and acidic residues.

Belongs to the TatA/E family. In terms of assembly, the Tat system comprises two distinct complexes: a TatABC complex, containing multiple copies of TatA, TatB and TatC subunits, and a separate TatA complex, containing only TatA subunits. Substrates initially bind to the TatABC complex, which probably triggers association of the separate TatA complex to form the active translocon.

It is found in the cell membrane. In terms of biological role, part of the twin-arginine translocation (Tat) system that transports large folded proteins containing a characteristic twin-arginine motif in their signal peptide across membranes. TatA could form the protein-conducting channel of the Tat system. The sequence is that of Sec-independent protein translocase protein TatA from Rubrobacter xylanophilus (strain DSM 9941 / JCM 11954 / NBRC 16129 / PRD-1).